The sequence spans 1173 residues: Protein GIGANTEA (1173 aa).

3 disordered regions span residues 150–187 (EQQNGDTERNCLSKATTSGSPTSEPKAGSPTQHERKPL), 604–641 (SGSKRPRSEYASTTENIEANQPVSNNQTANRKSRNVKG), and 840–863 (SRTEMNPRGNHKYARHSDEGSGRP). Composition is skewed to polar residues over residues 162–172 (SKATTSGSPTS) and 613–633 (YASTTENIEANQPVSNNQTAN). The span at 854-863 (RHSDEGSGRP) shows a compositional bias: basic and acidic residues.

This sequence belongs to the GIGANTEA family. As to quaternary structure, interacts with SPY. Interacts with ADO1 (via N-terminus) and ADO2. Interacts with ADO3 (via N-terminus). Interacts (via N-terminus) with CDF1. Interacts (via N-terminus) with TCP4. In terms of tissue distribution, widely expressed with highest levels in inflorescence apices, young flowers and young siliques.

It localises to the nucleus. The protein localises to the cytoplasm. Involved in regulation of circadian rhythm and photoperiodic flowering. May play a role in maintenance of circadian amplitude and period length. Is involved in phytochrome B signaling. Stabilizes ADO3 and the circadian photoreceptor ADO1/ZTL. Regulates 'CONSTANS' (CO) in the long-day flowering pathway by modulating the ADO3-dependent protein stability of CDF1 and CDF2, but is not essential to activate CO transcription. Regulates, via the microRNA miR172, a CO-independent pathway that promotes photoperiodic flowering by inducing 'FLOWERING LOCUS T'. In Arabidopsis thaliana (Mouse-ear cress), this protein is Protein GIGANTEA (GI).